Consider the following 527-residue polypeptide: Peptide chain release factor 3 (527 aa).

One can recognise a tr-type G domain in the interval 11–278 (AKRRTFAIIS…GFVEWAPAPL (268 aa)). GTP contacts are provided by residues 20–27 (SHPDAGKT), 87–91 (DTPGH), and 141–144 (NKMD).

It belongs to the TRAFAC class translation factor GTPase superfamily. Classic translation factor GTPase family. PrfC subfamily.

It localises to the cytoplasm. Increases the formation of ribosomal termination complexes and stimulates activities of RF-1 and RF-2. It binds guanine nucleotides and has strong preference for UGA stop codons. It may interact directly with the ribosome. The stimulation of RF-1 and RF-2 is significantly reduced by GTP and GDP, but not by GMP. The polypeptide is Peptide chain release factor 3 (Teredinibacter turnerae (strain ATCC 39867 / T7901)).